We begin with the raw amino-acid sequence, 273 residues long: Formamidopyrimidine-DNA glycosylase (273 aa).

Pro-2 functions as the Schiff-base intermediate with DNA in the catalytic mechanism. The active-site Proton donor is Glu-3. Lys-58 acts as the Proton donor; for beta-elimination activity in catalysis. DNA contacts are provided by His-91 and Arg-110. The FPG-type zinc-finger motif lies at 238 to 272 (QVYGKTGQPCPRCASMIVKIKLGGRGTHLCPHCQK). Catalysis depends on Arg-262, which acts as the Proton donor; for delta-elimination activity.

The protein belongs to the FPG family. In terms of assembly, monomer. The cofactor is Zn(2+).

The catalysed reaction is Hydrolysis of DNA containing ring-opened 7-methylguanine residues, releasing 2,6-diamino-4-hydroxy-5-(N-methyl)formamidopyrimidine.. It catalyses the reaction 2'-deoxyribonucleotide-(2'-deoxyribose 5'-phosphate)-2'-deoxyribonucleotide-DNA = a 3'-end 2'-deoxyribonucleotide-(2,3-dehydro-2,3-deoxyribose 5'-phosphate)-DNA + a 5'-end 5'-phospho-2'-deoxyribonucleoside-DNA + H(+). Functionally, involved in base excision repair of DNA damaged by oxidation or by mutagenic agents. Acts as a DNA glycosylase that recognizes and removes damaged bases. Has a preference for oxidized purines, such as 7,8-dihydro-8-oxoguanine (8-oxoG). Has AP (apurinic/apyrimidinic) lyase activity and introduces nicks in the DNA strand. Cleaves the DNA backbone by beta-delta elimination to generate a single-strand break at the site of the removed base with both 3'- and 5'-phosphates. This chain is Formamidopyrimidine-DNA glycosylase, found in Streptococcus thermophilus (strain CNRZ 1066).